A 227-amino-acid chain; its full sequence is N-acetyltransferase 8 (227 aa).

At 1–42 (MAPCHIRKYQESDRQWVVGLLSRGMAEHAPATFRQLLKLPRT) the chain is on the cytoplasmic side. Residues 43-63 (LILLLGGPLALLLVSGSWLLA) form a helical; Signal-anchor for type II membrane protein membrane-spanning segment. Residues 61–220 (LLALVFSISL…HTVHFIYHLP (160 aa)) form the N-acetyltransferase domain. The Lumenal portion of the chain corresponds to 64-227 (LVFSISLFPA…HLPSSKVGSL (164 aa)).

It belongs to the NAT8 family. In terms of tissue distribution, preferentially expressed in liver and kidney. Also detected in brain (at protein level).

Its subcellular location is the endoplasmic reticulum-Golgi intermediate compartment membrane. The protein resides in the endoplasmic reticulum membrane. It carries out the reaction L-lysyl-[protein] + acetyl-CoA = N(6)-acetyl-L-lysyl-[protein] + CoA + H(+). The catalysed reaction is an S-substituted L-cysteine + acetyl-CoA = an N-acetyl-L-cysteine-S-conjugate + CoA + H(+). It functions in the pathway sulfur metabolism; glutathione metabolism. Its function is as follows. Endoplasmic reticulum (ER)-membrane-bound lysine N-acetyltransferase catalyzing the N6-acetylation of lysine residues in the lumen of the ER in various proteins, including PROM1 and BACE1, using acetyl-CoA as acetyl donor. Thereby, may regulate apoptosis through the acetylation and the regulation of the expression of PROM1. May also regulate amyloid beta-peptide secretion through acetylation of BACE1 and the regulation of its expression in neurons. N(6)-lysine acetylation in the ER maintains protein homeostasis and regulates reticulophagy. Alternatively, acetylates the free alpha-amino group of cysteine S-conjugates to form mercapturic acids. This is the final step in a major route for detoxification of a wide variety of reactive electrophiles which starts with their incorporation into glutathione S-conjugates. The glutathione S-conjugates are then further processed into cysteine S-conjugates and finally mercapturic acids which are water soluble and can be readily excreted in urine or bile. This is N-acetyltransferase 8 from Homo sapiens (Human).